A 301-amino-acid chain; its full sequence is Diaminopimelate epimerase (301 aa).

Residues asparagine 15, glutamine 47, and asparagine 67 each contribute to the substrate site. Catalysis depends on cysteine 76, which acts as the Proton donor. Residues 77–78 (GN), asparagine 163, asparagine 197, and 215–216 (ER) contribute to the substrate site. The active-site Proton acceptor is cysteine 224. 225-226 (GS) contacts substrate.

This sequence belongs to the diaminopimelate epimerase family. As to quaternary structure, homodimer.

It localises to the cytoplasm. The catalysed reaction is (2S,6S)-2,6-diaminopimelate = meso-2,6-diaminopimelate. Its pathway is amino-acid biosynthesis; L-lysine biosynthesis via DAP pathway; DL-2,6-diaminopimelate from LL-2,6-diaminopimelate: step 1/1. Functionally, catalyzes the stereoinversion of LL-2,6-diaminopimelate (L,L-DAP) to meso-diaminopimelate (meso-DAP), a precursor of L-lysine and an essential component of the bacterial peptidoglycan. The sequence is that of Diaminopimelate epimerase from Rhizobium etli (strain ATCC 51251 / DSM 11541 / JCM 21823 / NBRC 15573 / CFN 42).